The chain runs to 137 residues: Small ribosomal subunit protein uS12 (137 aa).

A disordered region spans residues 1 to 23 (MPTINQLVRKGRKSKSSKSDAPA). Residue D102 is modified to 3-methylthioaspartic acid.

This sequence belongs to the universal ribosomal protein uS12 family. Part of the 30S ribosomal subunit. Contacts proteins S8 and S17. May interact with IF1 in the 30S initiation complex.

In terms of biological role, with S4 and S5 plays an important role in translational accuracy. Its function is as follows. Interacts with and stabilizes bases of the 16S rRNA that are involved in tRNA selection in the A site and with the mRNA backbone. Located at the interface of the 30S and 50S subunits, it traverses the body of the 30S subunit contacting proteins on the other side and probably holding the rRNA structure together. The combined cluster of proteins S8, S12 and S17 appears to hold together the shoulder and platform of the 30S subunit. In Levilactobacillus brevis (strain ATCC 367 / BCRC 12310 / CIP 105137 / JCM 1170 / LMG 11437 / NCIMB 947 / NCTC 947) (Lactobacillus brevis), this protein is Small ribosomal subunit protein uS12.